Consider the following 261-residue polypeptide: ATP synthase subunit a (261 aa).

A run of 6 helical transmembrane segments spans residues 45 to 65 (ITNVTMWMAIAVLVIAAILVL), 107 to 127 (VMTLFLFVLCGNVLGLLPLSF), 133 to 153 (MAVTVPLALMVFVGVTALGFM), 162 to 182 (MFWVTSAPLAIRPVLAVIEVI), 209 to 229 (IAGFASIVVVSPVVVGAVTAI), and 232 to 252 (LELLVAVVQAYVFTILTCVYL).

The protein belongs to the ATPase A chain family. As to quaternary structure, F-type ATPases have 2 components, CF(1) - the catalytic core - and CF(0) - the membrane proton channel. CF(1) has five subunits: alpha(3), beta(3), gamma(1), delta(1), epsilon(1). CF(0) has four main subunits: a, b, b' and c.

It localises to the cell inner membrane. Key component of the proton channel; it plays a direct role in the translocation of protons across the membrane. This chain is ATP synthase subunit a, found in Cereibacter sphaeroides (strain ATCC 17029 / ATH 2.4.9) (Rhodobacter sphaeroides).